The chain runs to 125 residues: Glycine cleavage system H protein (125 aa).

In terms of domain architecture, Lipoyl-binding spans 23 to 103; it reads TALVGITDFA…PYNAWLIKMK (81 aa). Lys64 is subject to N6-lipoyllysine.

This sequence belongs to the GcvH family. In terms of assembly, the glycine cleavage system is composed of four proteins: P, T, L and H. (R)-lipoate is required as a cofactor.

In terms of biological role, the glycine cleavage system catalyzes the degradation of glycine. The H protein shuttles the methylamine group of glycine from the P protein to the T protein. This chain is Glycine cleavage system H protein, found in Chlorobium chlorochromatii (strain CaD3).